The primary structure comprises 417 residues: UDP-N-acetylglucosamine 1-carboxyvinyltransferase (417 aa).

Phosphoenolpyruvate is bound at residue 22–23 (KN). R93 serves as a coordination point for UDP-N-acetyl-alpha-D-glucosamine. The active-site Proton donor is the C117. The residue at position 117 (C117) is a 2-(S-cysteinyl)pyruvic acid O-phosphothioketal. UDP-N-acetyl-alpha-D-glucosamine-binding positions include 122-126 (RPVDQ), D304, and I326.

Belongs to the EPSP synthase family. MurA subfamily.

The protein resides in the cytoplasm. It catalyses the reaction phosphoenolpyruvate + UDP-N-acetyl-alpha-D-glucosamine = UDP-N-acetyl-3-O-(1-carboxyvinyl)-alpha-D-glucosamine + phosphate. It functions in the pathway cell wall biogenesis; peptidoglycan biosynthesis. Its function is as follows. Cell wall formation. Adds enolpyruvyl to UDP-N-acetylglucosamine. The sequence is that of UDP-N-acetylglucosamine 1-carboxyvinyltransferase from Laribacter hongkongensis (strain HLHK9).